The primary structure comprises 1237 residues: Mediator of RNA polymerase II transcription subunit 5 (1237 aa).

Disordered regions lie at residues 1109-1131 (DDEPCSPQPPHAAANATSHTSNA) and 1202-1226 (HGAQQCRERTQNDAPVNGGKDADSG). A compositionally biased stretch (low complexity) spans 1119–1131 (HAAANATSHTSNA).

This sequence belongs to the Mediator complex subunit 5 family. In terms of assembly, component of the Mediator complex.

It is found in the nucleus. Functionally, component of the Mediator complex, a coactivator involved in the regulated transcription of nearly all RNA polymerase II-dependent genes. Mediator functions as a bridge to convey information from gene-specific regulatory proteins to the basal RNA polymerase II transcription machinery. Mediator is recruited to promoters by direct interactions with regulatory proteins and serves as a scaffold for the assembly of a functional preinitiation complex with RNA polymerase II and the general transcription factors. The sequence is that of Mediator of RNA polymerase II transcription subunit 5 (NUT1) from Mycosarcoma maydis (Corn smut fungus).